We begin with the raw amino-acid sequence, 126 residues long: Large-conductance mechanosensitive channel (126 aa).

Helical transmembrane passes span 14–34 (VIDL…VNSL) and 66–86 (FITT…LVVV).

Belongs to the MscL family. As to quaternary structure, homopentamer.

It localises to the cell membrane. Its function is as follows. Channel that opens in response to stretch forces in the membrane lipid bilayer. May participate in the regulation of osmotic pressure changes within the cell. The protein is Large-conductance mechanosensitive channel of Roseiflexus sp. (strain RS-1).